Here is a 23-residue protein sequence, read N- to C-terminus: Ascaphin-1 (23 aa).

N23 is subject to Asparagine amide.

As to expression, expressed by the skin glands.

The protein localises to the secreted. In terms of biological role, antimicrobial peptide that shows higher potency against Gram-negative bacteria than against Gram-positive bacteria. Has a very week hemolytic activity. This chain is Ascaphin-1, found in Ascaphus truei (Coastal tailed frog).